A 365-amino-acid polypeptide reads, in one-letter code: Caffeic acid 3-O-methyltransferase (365 aa).

Asparagine 133 is a binding site for (E)-ferulate. Residues glycine 210, aspartate 233, aspartate 253, methionine 254, methionine 266, and lysine 267 each contribute to the S-adenosyl-L-homocysteine site. Catalysis depends on histidine 271, which acts as the Proton acceptor. Residue aspartate 272 coordinates (E)-5-hydroxyferulate.

This sequence belongs to the class I-like SAM-binding methyltransferase superfamily. Cation-independent O-methyltransferase family. COMT subfamily. Homodimer.

It catalyses the reaction (E)-caffeate + S-adenosyl-L-methionine = (E)-ferulate + S-adenosyl-L-homocysteine + H(+). It carries out the reaction (E)-5-hydroxyferulate + S-adenosyl-L-methionine = (E)-sinapate + S-adenosyl-L-homocysteine + H(+). It participates in aromatic compound metabolism; phenylpropanoid biosynthesis. With respect to regulation, inhibited by Cu(2+), and to a lesser extent by Ni(2+), Mn(2+), Co(2+), Fe(3+) and Zn(2+). Unaffected by Fe(2+) and Mg(2+). Functionally, catalyzes the conversion of caffeic acid to ferulic acid and of 5-hydroxyferulic acid to sinapic acid. The resulting products may subsequently be converted to the corresponding alcohols that are incorporated into lignins. The polypeptide is Caffeic acid 3-O-methyltransferase (Ammi majus (Bishop's weed)).